A 412-amino-acid polypeptide reads, in one-letter code: Multidrug resistance protein MdtA (412 aa).

Residues 1-21 (MKGSNIRRWGAALAVVIIAGA) form the signal peptide. Disordered stretches follow at residues 33 to 53 (GSGA…RHGR) and 389 to 412 (VVTA…GARS).

The protein belongs to the membrane fusion protein (MFP) (TC 8.A.1) family. As to quaternary structure, part of a tripartite efflux system composed of MdtA, MdtB and MdtC.

The protein resides in the cell inner membrane. This is Multidrug resistance protein MdtA from Klebsiella pneumoniae subsp. pneumoniae (strain ATCC 700721 / MGH 78578).